We begin with the raw amino-acid sequence, 266 residues long: 3-methyl-2-oxobutanoate hydroxymethyltransferase (266 aa).

Mg(2+) contacts are provided by D45 and D84. 3-methyl-2-oxobutanoate contacts are provided by residues 45–46, D84, and K112; that span reads DS. E114 provides a ligand contact to Mg(2+). E181 (proton acceptor) is an active-site residue.

This sequence belongs to the PanB family. In terms of assembly, homodecamer; pentamer of dimers. Mg(2+) serves as cofactor.

It is found in the cytoplasm. The enzyme catalyses 3-methyl-2-oxobutanoate + (6R)-5,10-methylene-5,6,7,8-tetrahydrofolate + H2O = 2-dehydropantoate + (6S)-5,6,7,8-tetrahydrofolate. It participates in cofactor biosynthesis; (R)-pantothenate biosynthesis; (R)-pantoate from 3-methyl-2-oxobutanoate: step 1/2. Its function is as follows. Catalyzes the reversible reaction in which hydroxymethyl group from 5,10-methylenetetrahydrofolate is transferred onto alpha-ketoisovalerate to form ketopantoate. This is 3-methyl-2-oxobutanoate hydroxymethyltransferase from Pseudomonas putida (strain ATCC 700007 / DSM 6899 / JCM 31910 / BCRC 17059 / LMG 24140 / F1).